Reading from the N-terminus, the 386-residue chain is Putative acid--amine ligase YgiC (386 aa).

Position 100–102 (100–102 (RLD)) interacts with ATP. Mg(2+)-binding residues include D102, E115, and N117. ATP is bound by residues K267, K302, G309, Q336, and 371–373 (LIT).

The protein belongs to the glutathionylspermidine synthase preATP-grasp family.

Its function is as follows. May be a ligase forming an amide bond. Shows ATPase activity. This Escherichia coli O157:H7 protein is Putative acid--amine ligase YgiC (ygiC).